We begin with the raw amino-acid sequence, 273 residues long: Pantothenate synthetase (273 aa).

Residue 27-34 (MGALHQGH) participates in ATP binding. The active-site Proton donor is the histidine 34. Glutamine 58 is a (R)-pantoate binding site. Residue glutamine 58 participates in beta-alanine binding. 144 to 147 (GKKD) lines the ATP pocket. (R)-pantoate is bound at residue glutamine 150. ATP-binding positions include valine 173 and 181-184 (LSSR).

This sequence belongs to the pantothenate synthetase family. Homodimer.

It localises to the cytoplasm. The catalysed reaction is (R)-pantoate + beta-alanine + ATP = (R)-pantothenate + AMP + diphosphate + H(+). Its pathway is cofactor biosynthesis; (R)-pantothenate biosynthesis; (R)-pantothenate from (R)-pantoate and beta-alanine: step 1/1. In terms of biological role, catalyzes the condensation of pantoate with beta-alanine in an ATP-dependent reaction via a pantoyl-adenylate intermediate. The chain is Pantothenate synthetase from Nitratiruptor sp. (strain SB155-2).